Here is a 1070-residue protein sequence, read N- to C-terminus: Carbamoyl phosphate synthase large chain (1070 aa).

Residues Met-1–Glu-401 form a carboxyphosphate synthetic domain region. Arg-129, Arg-169, Gly-175, Gly-176, Lys-208, Ile-210, Glu-215, Gly-241, Ile-242, His-243, Gln-284, and Glu-298 together coordinate ATP. Residues Arg-133–Val-327 form the ATP-grasp 1 domain. Residues Gln-284, Glu-298, and Asn-300 each coordinate Mg(2+). Positions 284, 298, and 300 each coordinate Mn(2+). The tract at residues Ile-402 to Ser-546 is oligomerization domain. A carbamoyl phosphate synthetic domain region spans residues Thr-547–Gly-929. The ATP-grasp 2 domain maps to Glu-671–Leu-861. ATP is bound by residues Arg-707, Arg-746, Val-748, Glu-752, Gly-777, Val-778, His-779, Ser-780, Gln-820, and Glu-832. The Mg(2+) site is built by Gln-820, Glu-832, and Asn-834. Gln-820, Glu-832, and Asn-834 together coordinate Mn(2+). The MGS-like domain occupies Thr-930–Val-1070. Residues Thr-930 to Val-1070 form an allosteric domain region.

This sequence belongs to the CarB family. As to quaternary structure, composed of two chains; the small (or glutamine) chain promotes the hydrolysis of glutamine to ammonia, which is used by the large (or ammonia) chain to synthesize carbamoyl phosphate. Tetramer of heterodimers (alpha,beta)4. It depends on Mg(2+) as a cofactor. Mn(2+) serves as cofactor.

The catalysed reaction is hydrogencarbonate + L-glutamine + 2 ATP + H2O = carbamoyl phosphate + L-glutamate + 2 ADP + phosphate + 2 H(+). The enzyme catalyses hydrogencarbonate + NH4(+) + 2 ATP = carbamoyl phosphate + 2 ADP + phosphate + 2 H(+). Its pathway is amino-acid biosynthesis; L-arginine biosynthesis; carbamoyl phosphate from bicarbonate: step 1/1. The protein operates within pyrimidine metabolism; UMP biosynthesis via de novo pathway; (S)-dihydroorotate from bicarbonate: step 1/3. Its function is as follows. Large subunit of the glutamine-dependent carbamoyl phosphate synthetase (CPSase). CPSase catalyzes the formation of carbamoyl phosphate from the ammonia moiety of glutamine, carbonate, and phosphate donated by ATP, constituting the first step of 2 biosynthetic pathways, one leading to arginine and/or urea and the other to pyrimidine nucleotides. The large subunit (synthetase) binds the substrates ammonia (free or transferred from glutamine from the small subunit), hydrogencarbonate and ATP and carries out an ATP-coupled ligase reaction, activating hydrogencarbonate by forming carboxy phosphate which reacts with ammonia to form carbamoyl phosphate. This chain is Carbamoyl phosphate synthase large chain, found in Listeria monocytogenes serotype 4b (strain F2365).